A 342-amino-acid polypeptide reads, in one-letter code: Delta(6)-protoilludene synthase (342 aa).

Mg(2+) is bound by residues D81, N217, S221, and E225. Residues 81–85 carry the DDXXD motif motif; the sequence is DEYSD. The (2E,6E)-farnesyl diphosphate site is built by R306 and Y307.

The protein belongs to the terpene synthase family. Mg(2+) serves as cofactor.

The enzyme catalyses (2E,6E)-farnesyl diphosphate = Delta(6)-protoilludene + diphosphate. Functionally, delta(6)-protoilludene synthase, part of the gene cluster that mediates the biosynthesis of melleolides, a range of antifungal and phytotoxic polyketide derivatives composed of an orsellinic acid (OA) moiety esterified to various sesquiterpene alcohols. The first step in melleolides biosynthesis is performed by the delta(6)-protoilludene synthase PRO1 which catalyzes the cyclization of farnesyl diphosphate to protoilludene. The orsellinic acid synthase armB produces OA by condensing acetyl-CoA with 3 malonyl-CoA units in a three-round chain elongation reaction folowed by a C2-C7 ring closure. ArmB further catalyzes the trans-esterification of OA to the various sesquiterpene alcohols resulting from the hydroxylation of protoilludene. The melleolides cluster also includes 5 cytochrome P450 monooxygenases, 4 NAD(+)-dependent oxidoreductases, one flavin-dependent oxidoreductase, and one O-methyltransferase. The cytochrome P450 monooxygenases may be involved in protoilludene hydroxylation to elaborate melleolides with multiple alcohol groups, such as melleolide D, which carries alcohol functionalities at C-4, C-5, C-10, and C-13. The role of the NAD(+)-dependent enzymes remains unknown. Numerous melleolides, including arnamial, show 5'-O-methylation of the aromatic moiety which may be catalyzed by the methyltransferase encoded in the cluster. The flavin-dependent oxidoreductase might represent the dehydrogenase yielding the aldehyde in position 1 of arnamial and other melleolides. Finally, several halogenases, localized outside of the cluster, are able to catalyze the transfer of a single chlorine atom to the melleolide backbone, resulting in a 6'-chloromelleolide product. The chain is Delta(6)-protoilludene synthase from Armillaria ostoyae (Armillaria root rot fungus).